Reading from the N-terminus, the 113-residue chain is Large ribosomal subunit protein eL31A (113 aa).

This sequence belongs to the eukaryotic ribosomal protein eL31 family. Component of the large ribosomal subunit (LSU). Mature yeast ribosomes consist of a small (40S) and a large (60S) subunit. The 40S small subunit contains 1 molecule of ribosomal RNA (18S rRNA) and 33 different proteins (encoded by 57 genes). The large 60S subunit contains 3 rRNA molecules (25S, 5.8S and 5S rRNA) and 46 different proteins (encoded by 81 genes).

It is found in the cytoplasm. Functionally, component of the ribosome, a large ribonucleoprotein complex responsible for the synthesis of proteins in the cell. The small ribosomal subunit (SSU) binds messenger RNAs (mRNAs) and translates the encoded message by selecting cognate aminoacyl-transfer RNA (tRNA) molecules. The large subunit (LSU) contains the ribosomal catalytic site termed the peptidyl transferase center (PTC), which catalyzes the formation of peptide bonds, thereby polymerizing the amino acids delivered by tRNAs into a polypeptide chain. The nascent polypeptides leave the ribosome through a tunnel in the LSU and interact with protein factors that function in enzymatic processing, targeting, and the membrane insertion of nascent chains at the exit of the ribosomal tunnel. In Saccharomyces cerevisiae (strain ATCC 204508 / S288c) (Baker's yeast), this protein is Large ribosomal subunit protein eL31A.